Here is a 204-residue protein sequence, read N- to C-terminus: Proteasome subunit beta 1 (204 aa).

Residues 1–9 constitute a propeptide, removed in mature form; by autocatalysis; the sequence is MSYEYGTGA. Thr-10 (nucleophile) is an active-site residue.

It belongs to the peptidase T1B family. The 20S proteasome core is composed of 14 alpha and 14 beta subunits that assemble into four stacked heptameric rings, resulting in a barrel-shaped structure. The two inner rings, each composed of seven catalytic beta subunits, are sandwiched by two outer rings, each composed of seven alpha subunits. The catalytic chamber with the active sites is on the inside of the barrel. Has a gated structure, the ends of the cylinder being occluded by the N-termini of the alpha-subunits. Is capped at one or both ends by the proteasome regulatory ATPase, PAN.

It is found in the cytoplasm. It catalyses the reaction Cleavage of peptide bonds with very broad specificity.. With respect to regulation, the formation of the proteasomal ATPase PAN-20S proteasome complex, via the docking of the C-termini of PAN into the intersubunit pockets in the alpha-rings, triggers opening of the gate for substrate entry. Interconversion between the open-gate and close-gate conformations leads to a dynamic regulation of the 20S proteasome proteolysis activity. Functionally, component of the proteasome core, a large protease complex with broad specificity involved in protein degradation. In Hyperthermus butylicus (strain DSM 5456 / JCM 9403 / PLM1-5), this protein is Proteasome subunit beta 1.